The primary structure comprises 287 residues: NH(3)-dependent NAD(+) synthetase (287 aa).

53 to 60 is an ATP binding site; it reads GISGGQDS. Asp-59 lines the Mg(2+) pocket. Arg-146 contacts deamido-NAD(+). Thr-166 serves as a coordination point for ATP. Mg(2+) is bound at residue Glu-171. Deamido-NAD(+)-binding residues include Lys-179 and Asp-186. Lys-195 and Thr-217 together coordinate ATP. 266–267 provides a ligand contact to deamido-NAD(+); sequence HK.

The protein belongs to the NAD synthetase family. As to quaternary structure, homodimer.

It catalyses the reaction deamido-NAD(+) + NH4(+) + ATP = AMP + diphosphate + NAD(+) + H(+). It functions in the pathway cofactor biosynthesis; NAD(+) biosynthesis; NAD(+) from deamido-NAD(+) (ammonia route): step 1/1. In terms of biological role, catalyzes the ATP-dependent amidation of deamido-NAD to form NAD. Uses ammonia as a nitrogen source. The sequence is that of NH(3)-dependent NAD(+) synthetase from Deinococcus radiodurans (strain ATCC 13939 / DSM 20539 / JCM 16871 / CCUG 27074 / LMG 4051 / NBRC 15346 / NCIMB 9279 / VKM B-1422 / R1).